Reading from the N-terminus, the 415-residue chain is 3-isopropylmalate dehydratase large subunit (415 aa).

The [4Fe-4S] cluster site is built by Cys297, Cys355, and Cys358.

It belongs to the aconitase/IPM isomerase family. LeuC type 2 subfamily. Heterodimer of LeuC and LeuD. [4Fe-4S] cluster serves as cofactor.

The catalysed reaction is (2R,3S)-3-isopropylmalate = (2S)-2-isopropylmalate. It functions in the pathway amino-acid biosynthesis; L-leucine biosynthesis; L-leucine from 3-methyl-2-oxobutanoate: step 2/4. Functionally, catalyzes the isomerization between 2-isopropylmalate and 3-isopropylmalate, via the formation of 2-isopropylmaleate. The chain is 3-isopropylmalate dehydratase large subunit from Metallosphaera sedula (strain ATCC 51363 / DSM 5348 / JCM 9185 / NBRC 15509 / TH2).